Here is a 100-residue protein sequence, read N- to C-terminus: Urease subunit gamma (100 aa).

It belongs to the urease gamma subunit family. As to quaternary structure, heterotrimer of UreA (gamma), UreB (beta) and UreC (alpha) subunits. Three heterotrimers associate to form the active enzyme.

Its subcellular location is the cytoplasm. The enzyme catalyses urea + 2 H2O + H(+) = hydrogencarbonate + 2 NH4(+). It functions in the pathway nitrogen metabolism; urea degradation; CO(2) and NH(3) from urea (urease route): step 1/1. The protein is Urease subunit gamma of Acinetobacter baylyi (strain ATCC 33305 / BD413 / ADP1).